Here is a 558-residue protein sequence, read N- to C-terminus: Dihydroxy-acid dehydratase (558 aa).

Asp78 serves as a coordination point for Mg(2+). Cys119 provides a ligand contact to [2Fe-2S] cluster. Mg(2+)-binding residues include Asp120 and Lys121. The residue at position 121 (Lys121) is an N6-carboxylysine. Cys192 lines the [2Fe-2S] cluster pocket. Glu446 is a Mg(2+) binding site. Ser472 acts as the Proton acceptor in catalysis.

Belongs to the IlvD/Edd family. In terms of assembly, homodimer. [2Fe-2S] cluster is required as a cofactor. Mg(2+) serves as cofactor.

The catalysed reaction is (2R)-2,3-dihydroxy-3-methylbutanoate = 3-methyl-2-oxobutanoate + H2O. The enzyme catalyses (2R,3R)-2,3-dihydroxy-3-methylpentanoate = (S)-3-methyl-2-oxopentanoate + H2O. It participates in amino-acid biosynthesis; L-isoleucine biosynthesis; L-isoleucine from 2-oxobutanoate: step 3/4. It functions in the pathway amino-acid biosynthesis; L-valine biosynthesis; L-valine from pyruvate: step 3/4. Functions in the biosynthesis of branched-chain amino acids. Catalyzes the dehydration of (2R,3R)-2,3-dihydroxy-3-methylpentanoate (2,3-dihydroxy-3-methylvalerate) into 2-oxo-3-methylpentanoate (2-oxo-3-methylvalerate) and of (2R)-2,3-dihydroxy-3-methylbutanoate (2,3-dihydroxyisovalerate) into 2-oxo-3-methylbutanoate (2-oxoisovalerate), the penultimate precursor to L-isoleucine and L-valine, respectively. This chain is Dihydroxy-acid dehydratase, found in Campylobacter jejuni subsp. jejuni serotype O:2 (strain ATCC 700819 / NCTC 11168).